The chain runs to 452 residues: Tissue alpha-L-fucosidase (452 aa).

The first 17 residues, 1 to 17, serve as a signal peptide directing secretion; the sequence is MLLLLLLLLVAAAQAVA. N227, N254, N368, and N378 each carry an N-linked (GlcNAc...) asparagine glycan.

Belongs to the glycosyl hydrolase 29 family. As to quaternary structure, homotetramer.

The protein resides in the lysosome. It carries out the reaction an alpha-L-fucoside + H2O = L-fucose + an alcohol. The catalysed reaction is a neolactoside IV(2)-alpha-Fuc-nLc4Cer(d18:1(4E)) + H2O = a neolactoside nLc4Cer(d18:1(4E)) + L-fucose. The enzyme catalyses a neolactoside IV(2)-alpha-Fuc-nLc4Cer(d18:0) + H2O = a neolactoside nLc4Cer(d18:0) + L-fucose. Alpha-L-fucosidase is responsible for hydrolyzing the alpha-1,6-linked fucose joined to the reducing-end N-acetylglucosamine of the carbohydrate moieties of glycoproteins. The protein is Tissue alpha-L-fucosidase (Fuca1) of Mus musculus (Mouse).